The chain runs to 235 residues: Fibrillarin-like rRNA/tRNA 2'-O-methyltransferase (235 aa).

S-adenosyl-L-methionine-binding positions include Thr91–Thr92, Glu110–Phe111, Asp137–Ala138, and Asp157–Gln160.

This sequence belongs to the methyltransferase superfamily. Fibrillarin family. In terms of assembly, interacts with nop5. Component of box C/D small ribonucleoprotein (sRNP) particles that contain rpl7ae, FlpA and nop5, plus a guide RNA.

In terms of biological role, involved in pre-rRNA and tRNA processing. Utilizes the methyl donor S-adenosyl-L-methionine to catalyze the site-specific 2'-hydroxyl methylation of ribose moieties in rRNA and tRNA. Site specificity is provided by a guide RNA that base pairs with the substrate. Methylation occurs at a characteristic distance from the sequence involved in base pairing with the guide RNA. This Pyrobaculum aerophilum (strain ATCC 51768 / DSM 7523 / JCM 9630 / CIP 104966 / NBRC 100827 / IM2) protein is Fibrillarin-like rRNA/tRNA 2'-O-methyltransferase.